A 516-amino-acid chain; its full sequence is Polyprenol-phosphate-mannose--protein mannosyltransferase (516 aa).

Over residues 1 to 11 (MTALDTDTPTA) the composition is skewed to polar residues. Residues 1–23 (MTALDTDTPTAGRSAPLISPGPV) are disordered. The next 9 membrane-spanning stretches (helical) occupy residues 113–133 (YNGL…VMLV), 143–163 (STLV…SFVS), 166–186 (TALL…CLMV), 234–254 (WSGL…DAIA), 275–295 (AAYV…APWF), 384–404 (VMLV…GWAL), 413–433 (WRYG…FADI), 437–457 (MYFF…ALIL), and 473–493 (LGLL…AWMY).

Belongs to the glycosyltransferase 39 family.

It is found in the cell membrane. It functions in the pathway protein modification; protein glycosylation. Protein O-mannosyltransferase that catalyzes the transfer of a single mannose residue from a polyprenol phospho-mannosyl lipidic donor to the hydroxyl group of selected serine and threonine residues in acceptor proteins. Involved in DNA conjugation, in at least the recipient strain. The chain is Polyprenol-phosphate-mannose--protein mannosyltransferase (pmt) from Mycolicibacterium smegmatis (strain MKD8) (Mycobacterium smegmatis).